The chain runs to 277 residues: Phosphoribosylaminoimidazole-succinocarboxamide synthase (277 aa).

Belongs to the SAICAR synthetase family.

It carries out the reaction 5-amino-1-(5-phospho-D-ribosyl)imidazole-4-carboxylate + L-aspartate + ATP = (2S)-2-[5-amino-1-(5-phospho-beta-D-ribosyl)imidazole-4-carboxamido]succinate + ADP + phosphate + 2 H(+). It participates in purine metabolism; IMP biosynthesis via de novo pathway; 5-amino-1-(5-phospho-D-ribosyl)imidazole-4-carboxamide from 5-amino-1-(5-phospho-D-ribosyl)imidazole-4-carboxylate: step 1/2. This chain is Phosphoribosylaminoimidazole-succinocarboxamide synthase, found in Salinispora arenicola (strain CNS-205).